Consider the following 217-residue polypeptide: uncharacterized protein (217 aa).

The chain crosses the membrane as a helical span at residues 26–48; it reads VFMRGYVVGLVLALMLVTAPAMA.

It localises to the membrane. This is an uncharacterized protein from Archaeoglobus fulgidus (strain ATCC 49558 / DSM 4304 / JCM 9628 / NBRC 100126 / VC-16).